A 222-amino-acid polypeptide reads, in one-letter code: tRNA (guanine-N(1)-)-methyltransferase (222 aa).

Residues glycine 110 and 130-135 contribute to the S-adenosyl-L-methionine site; that span reads IGDYVL.

It belongs to the RNA methyltransferase TrmD family. Homodimer.

It is found in the cytoplasm. It carries out the reaction guanosine(37) in tRNA + S-adenosyl-L-methionine = N(1)-methylguanosine(37) in tRNA + S-adenosyl-L-homocysteine + H(+). Its function is as follows. Specifically methylates guanosine-37 in various tRNAs. The sequence is that of tRNA (guanine-N(1)-)-methyltransferase from Protochlamydia amoebophila (strain UWE25).